The sequence spans 473 residues: MAVKTYQAGVKEYRQTYWMPEYTPLDTDLLACFKITPQAGVDREEAAAAVAAESSTGTWTTVWTDLLTDMDYYKGRAYRIEDVPGDDTCFYAFIAYPIDLFEEGSVVNVFTSLVGNVFGFKAIRALRLEDIRFPIAYVKTCNGPPNGIQVERDVINKYGRPLLGCTIKPKLGLSGKNYGRAVYECLRGGLDFTKDDENINSQPFMRWKQRFDFVQEATLKAEQETGERKGHYLNVTAPTPDEMFKRAEYAKEIGAPIIMHDYITGGFCANTGLAQWCRDNGMLLHIHRAMHAVLDRNPHHGIHFRVLTKILRLSGGDHLHTGTVVGKLEGDRASTLGWIDLLRESYVPEDRSRGIFFDQDWGSMPGAFAVASGGIHVWHMPALVTIFGDDSVLQFGGGTLGHPWGNAAGAAANRVALEACVQARNEGRQVEKEGREILTAAAQHSPELKIAMETWKEIKFEFDTVDKLDVTNK.

Asn-116 and Thr-166 together coordinate substrate. Lys-168 functions as the Proton acceptor in the catalytic mechanism. Residue Lys-170 coordinates substrate. Residues Lys-194, Asp-196, and Glu-197 each coordinate Mg(2+). Lys-194 bears the N6-carboxylysine mark. His-287 acts as the Proton acceptor in catalysis. Substrate-binding residues include Arg-288, His-320, and Ser-372.

Belongs to the RuBisCO large chain family. Type I subfamily. As to quaternary structure, heterohexadecamer of 8 large chains and 8 small chains. Mg(2+) is required as a cofactor.

It catalyses the reaction 2 (2R)-3-phosphoglycerate + 2 H(+) = D-ribulose 1,5-bisphosphate + CO2 + H2O. The catalysed reaction is D-ribulose 1,5-bisphosphate + O2 = 2-phosphoglycolate + (2R)-3-phosphoglycerate + 2 H(+). In terms of biological role, ruBisCO catalyzes two reactions: the carboxylation of D-ribulose 1,5-bisphosphate, the primary event in carbon dioxide fixation, as well as the oxidative fragmentation of the pentose substrate. Both reactions occur simultaneously and in competition at the same active site. This is Ribulose bisphosphate carboxylase large chain from Thiomonas intermedia (strain K12) (Thiobacillus intermedius).